A 91-amino-acid chain; its full sequence is DNA-directed RNA polymerase subunit omega (91 aa).

This sequence belongs to the RNA polymerase subunit omega family. The RNAP catalytic core consists of 2 alpha, 1 beta, 1 beta' and 1 omega subunit. When a sigma factor is associated with the core the holoenzyme is formed, which can initiate transcription.

The catalysed reaction is RNA(n) + a ribonucleoside 5'-triphosphate = RNA(n+1) + diphosphate. Promotes RNA polymerase assembly. Latches the N- and C-terminal regions of the beta' subunit thereby facilitating its interaction with the beta and alpha subunits. This chain is DNA-directed RNA polymerase subunit omega, found in Pseudoalteromonas translucida (strain TAC 125).